Here is a 276-residue protein sequence, read N- to C-terminus: MRLLILLLFSFGIIYSHGDEIPTQKQVLVSIVPYKFLVEQISGDTCQVFSIVMGNRDPHNYELPPKYIEKIRQADLWFRIGEGFERTCERIVSCKQVDLAANIDKIMNGSCCQRFLNFDTHTWLSPKNLKIQIESIAEALIAIAPEHADLYRKNCSLLQDQLDLLDQKVSSIVSQSSQRNVLVAHGAFAYFCRDYGFVQHTIERSNHSELSPKDIVRVEQTIRDHNLHSVVLLKHAGKRSSAALVRKFNMTPVLLDPYAEDVFSNLIAIATAFADL.

An N-terminal signal peptide occupies residues 1 to 18 (MRLLILLLFSFGIIYSHG). Residues His-59, His-121, His-185, and Asp-256 each coordinate a divalent metal cation.

The protein belongs to the bacterial solute-binding protein 9 family.

Its subcellular location is the periplasm. In terms of biological role, part of an ATP-binding cassette (ABC) transport system involved in metal import. Binds a metal with high affinity and specificity and delivers it to the membrane permease for translocation into the cytoplasm. The chain is Putative metal-binding protein TC_0696 from Chlamydia muridarum (strain MoPn / Nigg).